The chain runs to 526 residues: Na(+)/H(+) antiporter NhaB (526 aa).

A run of 12 helical transmembrane segments spans residues isoleucine 25–tryptophan 45, isoleucine 52–isoleucine 72, leucine 89–methionine 109, leucine 130–isoleucine 164, leucine 204–proline 224, isoleucine 242–valine 262, alanine 305–isoleucine 325, glutamine 350–isoleucine 370, leucine 391–glycine 411, valine 448–leucine 468, methionine 479–leucine 499, and tryptophan 505–leucine 525.

It belongs to the NhaB Na(+)/H(+) (TC 2.A.34) antiporter family.

The protein localises to the cell inner membrane. It carries out the reaction 2 Na(+)(in) + 3 H(+)(out) = 2 Na(+)(out) + 3 H(+)(in). Na(+)/H(+) antiporter that extrudes sodium in exchange for external protons. This Aeromonas salmonicida (strain A449) protein is Na(+)/H(+) antiporter NhaB.